We begin with the raw amino-acid sequence, 137 residues long: Phosphoribosyl-AMP cyclohydrolase (137 aa).

Asp83 lines the Mg(2+) pocket. Zn(2+) is bound at residue Cys84. Mg(2+) contacts are provided by Asp85 and Asp87. Cys101 and Cys108 together coordinate Zn(2+).

It belongs to the PRA-CH family. As to quaternary structure, homodimer. The cofactor is Mg(2+). It depends on Zn(2+) as a cofactor.

The protein localises to the cytoplasm. The enzyme catalyses 1-(5-phospho-beta-D-ribosyl)-5'-AMP + H2O = 1-(5-phospho-beta-D-ribosyl)-5-[(5-phospho-beta-D-ribosylamino)methylideneamino]imidazole-4-carboxamide. The protein operates within amino-acid biosynthesis; L-histidine biosynthesis; L-histidine from 5-phospho-alpha-D-ribose 1-diphosphate: step 3/9. Catalyzes the hydrolysis of the adenine ring of phosphoribosyl-AMP. This is Phosphoribosyl-AMP cyclohydrolase from Burkholderia mallei (strain ATCC 23344).